The following is a 217-amino-acid chain: Putative peroxiredoxin Q, chloroplastic (217 aa).

The N-terminal 66 residues, 1–66 (MAFAVSTACR…PSTTGRNRIV (66 aa)), are a transit peptide targeting the chloroplast. The Thioredoxin domain maps to 70 to 217 (VSKGSAAPNF…GETLKILQSL (148 aa)). The active-site Cysteine sulfenic acid (-SOH) intermediate is Cys112. The cysteines at positions 112 and 117 are disulfide-linked.

The protein belongs to the peroxiredoxin family. BCP/PrxQ subfamily. In terms of assembly, monomer.

The protein resides in the plastid. It localises to the chloroplast thylakoid lumen. It catalyses the reaction a hydroperoxide + [thioredoxin]-dithiol = an alcohol + [thioredoxin]-disulfide + H2O. Its function is as follows. Thiol-specific peroxidase that catalyzes the reduction of hydrogen peroxide and organic hydroperoxides to water and alcohols, respectively. Plays a role in cell protection against oxidative stress by detoxifying peroxides. This Oryza sativa subsp. indica (Rice) protein is Putative peroxiredoxin Q, chloroplastic.